The primary structure comprises 195 residues: Holliday junction branch migration complex subunit RuvA (195 aa).

Positions 1–64 are domain I; sequence MIASIRGIIQ…EDALTLYGFS (64 aa). The tract at residues 65-142 is domain II; that stretch reads DPAQRNLFEQ…DLRQLSGTTP (78 aa). The segment at 143–151 is flexible linker; it reads GNVSTLDRE. A domain III region spans residues 151–195; sequence ELTDILISLGYSATEAAAAIAALPGDAPPTLEERLRLALRYFGSA.

It belongs to the RuvA family. Homotetramer. Forms an RuvA(8)-RuvB(12)-Holliday junction (HJ) complex. HJ DNA is sandwiched between 2 RuvA tetramers; dsDNA enters through RuvA and exits via RuvB. An RuvB hexamer assembles on each DNA strand where it exits the tetramer. Each RuvB hexamer is contacted by two RuvA subunits (via domain III) on 2 adjacent RuvB subunits; this complex drives branch migration. In the full resolvosome a probable DNA-RuvA(4)-RuvB(12)-RuvC(2) complex forms which resolves the HJ.

The protein localises to the cytoplasm. Its function is as follows. The RuvA-RuvB-RuvC complex processes Holliday junction (HJ) DNA during genetic recombination and DNA repair, while the RuvA-RuvB complex plays an important role in the rescue of blocked DNA replication forks via replication fork reversal (RFR). RuvA specifically binds to HJ cruciform DNA, conferring on it an open structure. The RuvB hexamer acts as an ATP-dependent pump, pulling dsDNA into and through the RuvAB complex. HJ branch migration allows RuvC to scan DNA until it finds its consensus sequence, where it cleaves and resolves the cruciform DNA. The sequence is that of Holliday junction branch migration complex subunit RuvA from Chloroflexus aurantiacus (strain ATCC 29364 / DSM 637 / Y-400-fl).